Here is a 122-residue protein sequence, read N- to C-terminus: Large ribosomal subunit protein bL17 (122 aa).

This sequence belongs to the bacterial ribosomal protein bL17 family. In terms of assembly, part of the 50S ribosomal subunit. Contacts protein L32.

The protein is Large ribosomal subunit protein bL17 of Wigglesworthia glossinidia brevipalpis.